A 315-amino-acid polypeptide reads, in one-letter code: Acetaldehyde dehydrogenase (315 aa).

NAD(+) is bound at residue 13 to 16 (SGNI). The Acyl-thioester intermediate role is filled by Cys-143. NAD(+) is bound by residues 174–182 (SAGPGTRKN) and Asn-285.

It belongs to the acetaldehyde dehydrogenase family.

The catalysed reaction is acetaldehyde + NAD(+) + CoA = acetyl-CoA + NADH + H(+). In Shewanella woodyi (strain ATCC 51908 / MS32), this protein is Acetaldehyde dehydrogenase.